The chain runs to 316 residues: Polyprenyl transferase prhE (316 aa).

Transmembrane regions (helical) follow at residues Val45 to Leu65, Val69 to Ile89, Gly114 to Pro134, Ser135 to Lys155, Leu163 to Pro183, Ile188 to Tyr208, Ile231 to Leu253, Gly257 to Leu276, and Ser296 to Leu316.

This sequence belongs to the UbiA prenyltransferase family. Mg(2+) is required as a cofactor.

It localises to the membrane. The catalysed reaction is 3,5-dimethylorsellinate + (2E,6E)-farnesyl diphosphate = (3R)-3-farnesyl-6-hydroxy-2,3,5-trimethyl-4-oxocyclohexa-1,5-diene-1-carboxylate + diphosphate + H(+). It functions in the pathway secondary metabolite biosynthesis; terpenoid biosynthesis. Functionally, polyprenyl transferase; part of the gene cluster that mediates the biosynthesis of paraherquonin, a meroterpenoid with a unique, highly congested hexacyclic molecular architecture. The first step of the pathway is the synthesis of 3,5-dimethylorsellinic acid (DMOA) by the polyketide synthase prhL. Synthesis of DMOA is followed by farnesylation by the prenyltransferase prhE, methylesterification by the methyl-transferase prhM, epoxidation of the prenyl chain by the flavin-dependent monooxygenase prhF, and cyclization of the farnesyl moiety by the terpene cyclase prhH, to yield the tetracyclic intermediate, protoaustinoid A. The short chain dehydrogenase prhI then oxidizes the C-3 alcohol group of the terpene cyclase product to transform protoaustinoid A into protoaustinoid B. The FAD-binding monooxygenase prhJ catalyzes the oxidation of protoaustinoid B into preaustinoid A which is further oxidized into preaustinoid A1 by FAD-binding monooxygenase phrK. Finally, prhA leads to berkeleydione via the berkeleyone B intermediate. PrhA is a multifunctional dioxygenase that first desaturates at C5-C6 to form berkeleyone B, followed by rearrangement of the A/B-ring to form the cycloheptadiene moiety in berkeleydione. Berkeleydione serves as the key intermediate for the biosynthesis of paraherquonin as well as many other meroterpenoids. The cytochrome P450 monooxygenases prhB, prhD, and prhN, as well as the isomerase prhC, are probably involved in the late stage of paraherquonin biosynthesis, after the production of berkeleydione. Especially prhC might be a multifunctional enzyme that catalyzes the D-ring expansion via intramolecular methoxy rearrangement, as well as the hydrolysis of the expanded D-ring. This Penicillium brasilianum protein is Polyprenyl transferase prhE.